The primary structure comprises 410 residues: 2-oxoglutarate-dependent dioxygenase AOP3 (410 aa).

Positions 258-355 (GNASVGAKEA…RYAAALFSYP (98 aa)) constitute a Fe2OG dioxygenase domain. 3 residues coordinate Fe cation: histidine 278, aspartate 280, and histidine 335. Arginine 346 contributes to the 2-oxoglutarate binding site.

This sequence belongs to the iron/ascorbate-dependent oxidoreductase family. Requires Fe(2+) as cofactor.

2-oxoglutarate-dependent dioxygenase involved in glucosinolates biosynthesis. Catalyzes the conversion of methylsulfinylalkyl glucosinolates to hydroxyalkyl glucosinolates. This Arabidopsis thaliana (Mouse-ear cress) protein is 2-oxoglutarate-dependent dioxygenase AOP3 (AOP3).